Reading from the N-terminus, the 359-residue chain is MLKKLIMFTGLLGGSVLFSGQALAAADFGPCTPEGGTHIFSATINKTVSDTSKNTTGATFVDFDSWNLGGTYAMSCECPDDTSLINDTLFKAVVPLAFVTNIESRSYYQINNNIAIASDVLISGGRGEYVNTPFENVGNLTNNRSQCSQNASSKDAIWTSGGKGHLSLYILHPFVGESIIPSTKIMDLFVTKKPSVYGSIPASSVYISGSITVPQGCELSSGSTLEIPFGEFKATDFKDRKGQVAKNATKFTKELQFKCTNISDGVKIFLRIEGMPNANDSNAIDMGNPDIGAVIEGANGKILVPNDASVNQELSVSGLVDDTHRTASTTISAYPISTTGKLPAAGDFEGIATMRIDVE.

Residues 1–24 (MLKKLIMFTGLLGGSVLFSGQALA) form the signal peptide.

The protein belongs to the fimbrial protein family.

Its subcellular location is the fimbrium. The chain is Protein LpfD (lpfD) from Salmonella typhimurium (strain LT2 / SGSC1412 / ATCC 700720).